A 258-amino-acid chain; its full sequence is Transcription factor TT2 (258 aa).

HTH myb-type domains follow at residues 11–63 and 64–118; these read REEL…KNYL and RPGI…RKRL. 2 consecutive DNA-binding regions (H-T-H motif) follow at residues 39–63 and 91–114; these read WSTL…KNYL and WSLI…NSNL. 47 to 54 is an ATP binding site; the sequence is GLKRCGKS.

In terms of assembly, interacts with BHLH2/EGL3/MYC146, BHLH12/MYC1 and BHLH42/TT8. As to expression, expressed at a high level in immature siliques and at a lower level in flowers. Undetected in young seedlings, roots, leaves and inflorescence stems.

The protein resides in the nucleus. In terms of biological role, transcription activator, when associated with BHLH2/EGL3/MYC146, BHLH12/MYC1, or BHLH42/TT8. Involved in the control of flavonoid late metabolism in developing siliques. Plays a key role in determining the tissue-specific activation of leucoanthocyanidin reductase (BANYULS). The chain is Transcription factor TT2 (TT2) from Arabidopsis thaliana (Mouse-ear cress).